Reading from the N-terminus, the 427-residue chain is Mitochondrial fission protein ELM1 (427 aa).

Interacts with DRP3 and DRP3B.

It is found in the mitochondrion outer membrane. Functionally, plant-specific factor involved in mitochondria fission. Is required for the correct localization of DRP3A from the cytosol to mitochondrial fission sites. Does not seem to be required for peroxisomal division. In Arabidopsis thaliana (Mouse-ear cress), this protein is Mitochondrial fission protein ELM1 (ELM1).